Reading from the N-terminus, the 265-residue chain is Glutamate racemase (265 aa).

Substrate-binding positions include 12 to 13 and 44 to 45; these read DS and YG. Cys75 acts as the Proton donor/acceptor in catalysis. Position 76–77 (76–77) interacts with substrate; the sequence is NT. Cys186 functions as the Proton donor/acceptor in the catalytic mechanism. Substrate is bound at residue 187 to 188; it reads TH.

This sequence belongs to the aspartate/glutamate racemases family.

The catalysed reaction is L-glutamate = D-glutamate. The protein operates within cell wall biogenesis; peptidoglycan biosynthesis. Its function is as follows. Provides the (R)-glutamate required for cell wall biosynthesis. The protein is Glutamate racemase of Pseudomonas putida (strain GB-1).